The sequence spans 580 residues: Laccase-6 (580 aa).

A signal peptide spans 1–22 (MSCSWMIPVFAILAFVASAAQA). 2 consecutive Plastocyanin-like domains span residues 30–148 (NVAT…PRRA) and 158–317 (EEKT…YVDA). Residues Asn44 and Asn78 are each glycosylated (N-linked (GlcNAc...) asparagine). His82, His84, His127, and His129 together coordinate Cu cation. Residues Asn306, Asn335, Asn385, Asn397, and Asn462 are each glycosylated (N-linked (GlcNAc...) asparagine). Residues 424-564 (DFPDQPPVAF…AMVFEVESGP (141 aa)) form the Plastocyanin-like 3 domain. His480, His483, His485, His543, Cys544, His545, and His549 together coordinate Cu cation.

It belongs to the multicopper oxidase family. Cu cation is required as a cofactor.

It localises to the secreted. The protein localises to the extracellular space. Its subcellular location is the apoplast. The catalysed reaction is 4 hydroquinone + O2 = 4 benzosemiquinone + 2 H2O. Lignin degradation and detoxification of lignin-derived products. The polypeptide is Laccase-6 (LAC6) (Oryza sativa subsp. japonica (Rice)).